The sequence spans 166 residues: Large ribosomal subunit protein bL19 (166 aa).

It belongs to the bacterial ribosomal protein bL19 family. As to quaternary structure, part of the 50S ribosomal subunit. Forms a cluster with proteins L3 and L14.

In terms of biological role, this protein is located at the 30S-50S ribosomal subunit interface and may play a role in the structure and function of the aminoacyl-tRNA binding site. Binds the 23S rRNA. In Deinococcus radiodurans (strain ATCC 13939 / DSM 20539 / JCM 16871 / CCUG 27074 / LMG 4051 / NBRC 15346 / NCIMB 9279 / VKM B-1422 / R1), this protein is Large ribosomal subunit protein bL19 (rplS).